We begin with the raw amino-acid sequence, 461 residues long: Probable tubulin polyglutamylase TTLL9 (461 aa).

The span at Met1 to Lys10 shows a compositional bias: polar residues. The segment at Met1–Arg20 is disordered. Positions Gln22 to Arg402 constitute a TTL domain. ATP contacts are provided by residues Lys149 and Gln155–Gly156. Residue Gln155 coordinates a protein. The segment at Arg172 to Asp208 is disordered. The span at His198–Asp208 shows a compositional bias: basic and acidic residues. Residues Gln218 to Val221 and Lys231 to Asp233 contribute to the ATP site. Arg257 contributes to the L-glutamate binding site. Thr276–Asn277 lines the ATP pocket. Lys294 contributes to the L-glutamate binding site. Mg(2+) contacts are provided by Asp348, Glu361, and Asn363. Lys379 provides a ligand contact to L-glutamate.

It belongs to the tubulin--tyrosine ligase family. The cofactor is Mg(2+). As to expression, highly expressed in brain and testis. Expressed in heart, kidney and lung. In the brain, expressed in ependymal cilia, cortex, corpus callosum and striatum. In the testis, specifically expressed in the seminiferous tubules.

It localises to the cytoplasm. The protein localises to the cytoskeleton. Its subcellular location is the cilium basal body. It is found in the flagellum axoneme. The catalysed reaction is (L-glutamyl)(n)-gamma-L-glutamyl-L-glutamyl-[protein] + L-glutamate + ATP = (L-glutamyl)(n+1)-gamma-L-glutamyl-L-glutamyl-[protein] + ADP + phosphate + H(+). Its function is as follows. Probable tubulin polyglutamylase that generates side chains of glutamate on the gamma-carboxyl group of specific glutamate residues within the C-terminal tail of target proteins. Similar to TTLL1, may acquire enzymatic activity only in complex with other proteins as it is most likely lacking domains important for autonomous activity. Mediates tubulin polyglutamylation which induces establishment of microtubule heterogeneity in sperm flagella, thereby playing a role in normal motile flagella axoneme structure and sperm flagella beating pattern. The protein is Probable tubulin polyglutamylase TTLL9 of Mus musculus (Mouse).